Here is a 108-residue protein sequence, read N- to C-terminus: Small ribosomal subunit protein uS17 (108 aa).

It belongs to the universal ribosomal protein uS17 family. In terms of assembly, part of the 30S ribosomal subunit.

In terms of biological role, one of the primary rRNA binding proteins, it binds specifically to the 5'-end of 16S ribosomal RNA. The chain is Small ribosomal subunit protein uS17 from Methanoculleus marisnigri (strain ATCC 35101 / DSM 1498 / JR1).